The sequence spans 177 residues: dCTP deaminase, dUMP-forming (177 aa).

DCTP is bound by residues 95–100, Asp112, 120–122, Gln141, Tyr155, and Gln162; these read RSSLGR and TLE. Glu122 (proton donor/acceptor) is an active-site residue.

This sequence belongs to the dCTP deaminase family. As to quaternary structure, homotrimer.

The enzyme catalyses dCTP + 2 H2O = dUMP + NH4(+) + diphosphate. Its pathway is pyrimidine metabolism; dUMP biosynthesis; dUMP from dCTP: step 1/1. Functionally, bifunctional enzyme that catalyzes both the deamination of dCTP to dUTP and the hydrolysis of dUTP to dUMP without releasing the toxic dUTP intermediate. The sequence is that of dCTP deaminase, dUMP-forming from Hydrogenobaculum sp. (strain Y04AAS1).